A 148-amino-acid chain; its full sequence is Putative lysozyme C-2 (148 aa).

Positions 1–18 are cleaved as a signal peptide; that stretch reads MKALLVLGFLLLSASVQA. One can recognise a C-type lysozyme domain in the interval 19–148; that stretch reads KVFKHCELAR…LSGYIRNCGV (130 aa). Cystine bridges form between cysteine 24/cysteine 146, cysteine 48/cysteine 134, cysteine 83/cysteine 99, and cysteine 95/cysteine 113. Catalysis depends on residues glutamate 53 and aspartate 71.

The protein belongs to the glycosyl hydrolase 22 family. As to quaternary structure, monomer.

The protein localises to the secreted. The catalysed reaction is Hydrolysis of (1-&gt;4)-beta-linkages between N-acetylmuramic acid and N-acetyl-D-glucosamine residues in a peptidoglycan and between N-acetyl-D-glucosamine residues in chitodextrins.. In terms of biological role, lysozymes have primarily a bacteriolytic function; those in tissues and body fluids are associated with the monocyte-macrophage system and enhance the activity of immunoagents. In the intestine they may also have a digestive function. The polypeptide is Putative lysozyme C-2 (Lyz2) (Rattus norvegicus (Rat)).